Reading from the N-terminus, the 129-residue chain is MNSATSLMCFALLLISPLCMGYTAEDREADSRRVAEIIKNSQDDNSKINSIQELLDIYKRLYPSLTPEERESIDNFVNEHTDEVLVDGVPSQGGRKTKFAGKILSEATKGVATGFFEELGSKLAGLFTG.

An N-terminal signal peptide occupies residues 1–21 (MNSATSLMCFALLLISPLCMG).

The protein belongs to the Turandot family.

It localises to the secreted. A humoral factor that may play a role in stress tolerance. The sequence is that of Protein Turandot B2 (TotB2) from Drosophila erecta (Fruit fly).